The following is a 272-amino-acid chain: Prohibitin 1 (272 aa).

Residue Ala2 is modified to N-acetylalanine. Thr91 carries the phosphothreonine modification. N6-acetyllysine occurs at positions 128 and 186. The stretch at 177–211 (KEFTEAVEAKQVAQQEAERARFVVEKAEQQKKAAI) forms a coiled coil. N6-acetyllysine; alternate is present on Lys202. Lys202 carries the N6-succinyllysine; alternate modification. Tyr249 carries the phosphotyrosine modification.

This sequence belongs to the prohibitin family. As to quaternary structure, interacts with PHB2. Interacts with STOML2. Interacts with CD86 (via cytoplasmic domain); the interactions increases after priming with CD40. In terms of assembly, (Microbial infection) Interacts with human enterovirus 71/EV-71 capsid protein VP0, protein 3CD and protease 3C. In terms of tissue distribution, widely expressed in different tissues.

The protein localises to the mitochondrion inner membrane. It localises to the nucleus. Its subcellular location is the cell membrane. The protein resides in the cytoplasm. With respect to regulation, target of the anti-cancer drug Rocaglamide (Roc-A). Functionally, protein with pleiotropic attributes mediated in a cell-compartment- and tissue-specific manner, which include the plasma membrane-associated cell signaling functions, mitochondrial chaperone, and transcriptional co-regulator of transcription factors in the nucleus. Plays a role in adipose tissue and glucose homeostasis in a sex-specific manner. Contributes to pulmonary vascular remodeling by accelerating proliferation of pulmonary arterial smooth muscle cells. In the mitochondria, together with PHB2, forms large ring complexes (prohibitin complexes) in the inner mitochondrial membrane (IMM) and functions as a chaperone protein that stabilizes mitochondrial respiratory enzymes and maintains mitochondrial integrity in the IMM, which is required for mitochondrial morphogenesis, neuronal survival, and normal lifespan. The prohibitin complex, with DNAJC19, regulates cardiolipin remodeling and the protein turnover of OMA1 in a cardiolipin-binding manner. Regulates mitochondrial respiration activity playing a role in cellular aging. The prohibitin complex plays a role of mitophagy receptor involved in targeting mitochondria for autophagic degradation. Involved in mitochondrial-mediated antiviral innate immunity, activates RIG-I-mediated signal transduction and production of IFNB1 and pro-inflammatory cytokine IL6. In terms of biological role, in the nucleus, acts as a transcription coregulator, enhances promoter binding by TP53, a transcription factor it activates, but reduces the promoter binding by E2F1, a transcription factor it represses. Interacts with STAT3 to affect IL17 secretion in T-helper Th17 cells. Its function is as follows. In the plasma membrane, cooperates with CD86 to mediate CD86-signaling in B lymphocytes that regulates the level of IgG1 produced through the activation of distal signaling intermediates. Upon CD40 engagement, required to activate NF-kappa-B signaling pathway via phospholipase C and protein kinase C activation. Functionally, (Microbial infection) In neuronal cells, cell surface-expressed PHB1 is involved in human enterovirus 71/EV-71 entry into neuronal cells specifically, while membrane-bound mitochondrial PHB1 associates with the virus replication complex and facilitates viral replication. May serve as a receptor for EV71. The chain is Prohibitin 1 (Phb1) from Mus musculus (Mouse).